We begin with the raw amino-acid sequence, 485 residues long: AP2-like ethylene-responsive transcription factor TOE2 (485 aa).

Residues 124–135 (GDFIGSGSGGGD) are compositionally biased toward gly residues. The interval 124-161 (GDFIGSGSGGGDASRVMQPPSQPVKKSRRGPRSKSSQY) is disordered. Positions 160-216 (QYRGVTFYRRTGRWESHIWDCGKQVYLGGFDTAHAAARAYDRAAVKFRGLEADINFV) form a DNA-binding region, AP2/ERF.

The protein belongs to the AP2/ERF transcription factor family. AP2 subfamily.

The protein resides in the nucleus. Functionally, probably acts as a transcriptional activator. Binds to the GCC-box pathogenesis-related promoter element. May be involved in the regulation of gene expression by stress factors and by components of stress signal transduction pathways. Regulates negatively the transition to flowering time and confers flowering time delay. The protein is AP2-like ethylene-responsive transcription factor TOE2 (TOE2) of Arabidopsis thaliana (Mouse-ear cress).